The sequence spans 147 residues: Large ribosomal subunit protein uL13 (147 aa).

This sequence belongs to the universal ribosomal protein uL13 family. Part of the 50S ribosomal subunit.

Functionally, this protein is one of the early assembly proteins of the 50S ribosomal subunit, although it is not seen to bind rRNA by itself. It is important during the early stages of 50S assembly. The chain is Large ribosomal subunit protein uL13 from Lactobacillus delbrueckii subsp. bulgaricus (strain ATCC 11842 / DSM 20081 / BCRC 10696 / JCM 1002 / NBRC 13953 / NCIMB 11778 / NCTC 12712 / WDCM 00102 / Lb 14).